A 514-amino-acid chain; its full sequence is 2,3-bisphosphoglycerate-independent phosphoglycerate mutase (514 aa).

Mn(2+) is bound by residues aspartate 14 and serine 64. The active-site Phosphoserine intermediate is serine 64. Substrate-binding positions include histidine 125, 155–156 (RD), arginine 187, arginine 193, 263–266 (RADR), and lysine 336. Aspartate 403, histidine 407, aspartate 444, histidine 445, and histidine 463 together coordinate Mn(2+).

Belongs to the BPG-independent phosphoglycerate mutase family. In terms of assembly, monomer. Mn(2+) is required as a cofactor.

It carries out the reaction (2R)-2-phosphoglycerate = (2R)-3-phosphoglycerate. It functions in the pathway carbohydrate degradation; glycolysis; pyruvate from D-glyceraldehyde 3-phosphate: step 3/5. Catalyzes the interconversion of 2-phosphoglycerate and 3-phosphoglycerate. This Escherichia coli (strain ATCC 8739 / DSM 1576 / NBRC 3972 / NCIMB 8545 / WDCM 00012 / Crooks) protein is 2,3-bisphosphoglycerate-independent phosphoglycerate mutase.